Consider the following 82-residue polypeptide: ATP synthase subunit c (82 aa).

The next 2 membrane-spanning stretches (helical) occupy residues 18–38 (LGEA…IGKI) and 61–81 (IIAA…CGFL).

It belongs to the ATPase C chain family. In terms of assembly, F-type ATPases have 2 components, F(1) - the catalytic core - and F(0) - the membrane proton channel. F(1) has five subunits: alpha(3), beta(3), gamma(1), delta(1), epsilon(1). F(0) has three main subunits: a(1), b(2) and c(10-14). The alpha and beta chains form an alternating ring which encloses part of the gamma chain. F(1) is attached to F(0) by a central stalk formed by the gamma and epsilon chains, while a peripheral stalk is formed by the delta and b chains.

It is found in the cell inner membrane. In terms of biological role, f(1)F(0) ATP synthase produces ATP from ADP in the presence of a proton or sodium gradient. F-type ATPases consist of two structural domains, F(1) containing the extramembraneous catalytic core and F(0) containing the membrane proton channel, linked together by a central stalk and a peripheral stalk. During catalysis, ATP synthesis in the catalytic domain of F(1) is coupled via a rotary mechanism of the central stalk subunits to proton translocation. Its function is as follows. Key component of the F(0) channel; it plays a direct role in translocation across the membrane. A homomeric c-ring of between 10-14 subunits forms the central stalk rotor element with the F(1) delta and epsilon subunits. This Azobacteroides pseudotrichonymphae genomovar. CFP2 protein is ATP synthase subunit c.